A 552-amino-acid polypeptide reads, in one-letter code: Putative E3 ubiquitin-protein ligase ARI6 (552 aa).

The TRIAD supradomain stretch occupies residues 129-343 (REFTCGICFE…GGYYACNRYE (215 aa)). Zn(2+) is bound by residues Cys-133, Cys-136, Cys-150, His-152, Cys-155, Cys-158, Cys-178, Cys-183, Cys-222, Cys-227, Cys-245, Cys-247, Cys-252, Cys-255, His-260, Cys-265, Cys-292, and Cys-295. Residues 133 to 183 (CGICFESYPLEETISVSCGHPFCATCWTGYISTSINDGPGCLMLKCPYPCC) form an RING-type 1 zinc finger. Residues 202-265 (ERYYRYFLRS…SEEAHRPVDC (64 aa)) form an IBR-type zinc finger. Residues 292 to 322 (CPKCKRPIEKNHGCMHMTCTPPCKFEFCWLC) form an RING-type 2; atypical zinc finger. Residue Cys-305 is part of the active site. Zn(2+) contacts are provided by Cys-310, Cys-314, Cys-319, Cys-322, His-329, and Cys-339. The disordered stretch occupies residues 518–552 (HAASSKPANCKPSSNTKDGGKGKKEALTMAGSAET). Residues 519 to 534 (AASSKPANCKPSSNTK) are compositionally biased toward polar residues.

Belongs to the RBR family. Ariadne subfamily. The cofactor is Zn(2+).

It carries out the reaction [E2 ubiquitin-conjugating enzyme]-S-ubiquitinyl-L-cysteine + [acceptor protein]-L-lysine = [E2 ubiquitin-conjugating enzyme]-L-cysteine + [acceptor protein]-N(6)-ubiquitinyl-L-lysine.. The protein operates within protein modification; protein ubiquitination. Its function is as follows. Might act as an E3 ubiquitin-protein ligase, or as part of E3 complex, which accepts ubiquitin from specific E2 ubiquitin-conjugating enzymes and then transfers it to substrates. This is Putative E3 ubiquitin-protein ligase ARI6 (ARI6) from Arabidopsis thaliana (Mouse-ear cress).